A 503-amino-acid chain; its full sequence is Probable cytosol aminopeptidase (503 aa).

2 residues coordinate Mn(2+): lysine 271 and aspartate 276. Lysine 283 is a catalytic residue. Residues aspartate 294, aspartate 353, and glutamate 355 each coordinate Mn(2+). Arginine 357 is a catalytic residue.

It belongs to the peptidase M17 family. Requires Mn(2+) as cofactor.

Its subcellular location is the cytoplasm. It carries out the reaction Release of an N-terminal amino acid, Xaa-|-Yaa-, in which Xaa is preferably Leu, but may be other amino acids including Pro although not Arg or Lys, and Yaa may be Pro. Amino acid amides and methyl esters are also readily hydrolyzed, but rates on arylamides are exceedingly low.. The catalysed reaction is Release of an N-terminal amino acid, preferentially leucine, but not glutamic or aspartic acids.. Its function is as follows. Presumably involved in the processing and regular turnover of intracellular proteins. Catalyzes the removal of unsubstituted N-terminal amino acids from various peptides. The sequence is that of Probable cytosol aminopeptidase from Chlorobium phaeobacteroides (strain DSM 266 / SMG 266 / 2430).